The chain runs to 370 residues: MPAVADCTVVFPLRHDPASTHPDVSGLVGKAFERVNWRDAFDTFLAEERSALWAAKTAFDNTDTSAYIAARDALFPQAVSGVHGAVAFRNRAGHKLHETMEAVGLWEYLKGGATRAKGTFTFVDVCGGPGAFSQALFAMGKEHKLRLRGFGLTLRNVKGLDWYTDLPSRSFFPCYGIDGTGDVFKLENIESLCSLTCKENVRLVVADGGFDVPTEVVNFQETISCRIVYGQWLSAVKLLRPGGCFVLKLFDCFSPFTRAILFLTTHLYESVQVVKPRHSRVVNSERYLVCIGFIGAPKQWLEHFERCYQEGFVDNDNIPTVLPTSLFSGDKIFGADVERMSATIASNQVSGLHAILEKLQSKPAMEEVKS.

Positions 87–294 (AFRNRAGHKL…ERYLVCIGFI (208 aa)) constitute a RrmJ-type SAM-dependent 2'-O-MTase domain. Positions 130 and 207 each coordinate S-adenosyl-L-methionine. Catalysis depends on Lys248, which acts as the Proton acceptor.

Component of a complex composed of CBF5, GAR1, NHP2, MTR1, NOP10 and Tb11.01.8210.

Its subcellular location is the nucleus. The enzyme catalyses a 5'-end (N(7)-methyl 5'-triphosphoguanosine)-ribonucleoside in mRNA + S-adenosyl-L-methionine = a 5'-end (N(7)-methyl 5'-triphosphoguanosine)-(2'-O-methyl-ribonucleoside) in mRNA + S-adenosyl-L-homocysteine + H(+). In terms of biological role, S-adenosyl-L-methionine-dependent methyltransferase that mediates RNA cap1 2'-O-ribose methylation to the 5'-cap structure of spliced leader and U1 small nuclear RNAs. Methylates the ribose of the first nucleotide of a m(7)GpppG-capped RNA to produce m(7)GpppNmp (cap1). Cap1 modification is linked to higher levels of translation. Recognizes a guanosine cap on RNA independent of its N(7) methylation status. In Trypanosoma brucei brucei (strain 927/4 GUTat10.1), this protein is Cap-specific mRNA (nucleoside-2'-O-)-methyltransferase 1 (MTR1).